Consider the following 432-residue polypeptide: Solute carrier family 35 member F5 (432 aa).

The first 33 residues, 1–33, serve as a signal peptide directing secretion; the sequence is MFLPSTTNHSSAPLQKHLCLFCTFWALLFGSHG. A Phosphoserine modification is found at Ser-116. 8 helical membrane-spanning segments follow: residues 152–172, 177–197, 205–225, 236–256, 270–290, 304–324, 329–349, and 361–381; these read ISFF…EALS, AIVN…AAVF, FTLS…LVNL, TIGS…IVMI, MFFG…FFLL, VVLM…EFLW, FLTS…LSII, and WLFF…TLLC. In terms of domain architecture, EamA spans 161–225; that stretch reads FLANLSYQEA…SIGGVVLVNL (65 aa).

This sequence belongs to the SLC35F solute transporter family.

The protein localises to the membrane. Putative solute transporter. The chain is Solute carrier family 35 member F5 (SLC35F5) from Macaca fascicularis (Crab-eating macaque).